The primary structure comprises 103 residues: Large ribosomal subunit protein bL21 (103 aa).

The protein belongs to the bacterial ribosomal protein bL21 family. Part of the 50S ribosomal subunit. Contacts protein L20.

In terms of biological role, this protein binds to 23S rRNA in the presence of protein L20. This is Large ribosomal subunit protein bL21 from Psychrobacter arcticus (strain DSM 17307 / VKM B-2377 / 273-4).